The primary structure comprises 702 residues: MNSLFASTARGLEELLKTELENLGAVECQVVQGGVHFKGDTRLVYQSLMWSRLASRIMLPLGECKVYSDLDLYLGVQAINWTEMFNPGATFAVHFSGLNDTIRNSQYGAMKVKDAIVDAFTRKNLPRPNVDRDAPDIRVNVWLHKETASIALDLSGDGLHLRGYRDRAGIAPIKETLAAAIVMRSGWQPGTPLLDPMCGSGTLLIEAAMLATDRAPGLHRGRWGFSGWTQHDEAIWQEVKAEAQTRARKGLAEYSSHFYGSDSDARVIQRARTNARLAGIGELITFEVKDVAQLTNPLPKGPYGTVLSNPPYGERLDSEPALIALHSLLGRIMKNQFGGWNLSLFSASPDLLSCLQLRADKQYKAKNGPLDCVQKNYHVAESTPDSKPAMAAEDYANRLRKNLKKFEKWARQEGIECYRLYDADLPEYNVAVDRYADWVVVQEYAPPKTIDAHKARQRLFDIIAATISVLGIAPNKLVLKTRERQKGKNQYQKLGEKGEFLEVTEYNAHLWVNLTDYLDTGLFLDHRIARRMLGQMSKGKDFLNLFSYTGSATVHAGLGGARSTTTVDMSRTYLEWAERNLRLNGLTGRAHRLIQADCLAWLREANEQFDLIFIDPPTFSNSKRMEDAFDVQRDHLVLMKDLKRLLRAGGTIMFSNNKRGFRMDLDGLAKLGLKAQEITQKTLSQDFARNRQIHNCWLITAA.

The THUMP domain maps to 43–154 (LVYQSLMWSR…KETASIALDL (112 aa)).

The protein belongs to the methyltransferase superfamily. RlmKL family.

Its subcellular location is the cytoplasm. It catalyses the reaction guanosine(2445) in 23S rRNA + S-adenosyl-L-methionine = N(2)-methylguanosine(2445) in 23S rRNA + S-adenosyl-L-homocysteine + H(+). The catalysed reaction is guanosine(2069) in 23S rRNA + S-adenosyl-L-methionine = N(2)-methylguanosine(2069) in 23S rRNA + S-adenosyl-L-homocysteine + H(+). In terms of biological role, specifically methylates the guanine in position 2445 (m2G2445) and the guanine in position 2069 (m7G2069) of 23S rRNA. The polypeptide is Ribosomal RNA large subunit methyltransferase K/L (Escherichia coli O6:K15:H31 (strain 536 / UPEC)).